Consider the following 76-residue polypeptide: Large ribosomal subunit protein eL20 (76 aa).

Belongs to the eukaryotic ribosomal protein eL20 family. In terms of assembly, part of the 50S ribosomal subunit. Binds 23S rRNA.

The chain is Large ribosomal subunit protein eL20 from Methanococcus maripaludis (strain C7 / ATCC BAA-1331).